Consider the following 266-residue polypeptide: Protein YABBY 5 (266 aa).

Positions 1-22 (MMSSAPETFSLDHLSQHQQQQP) are disordered. The segment at 36–63 (CNFCDTILAVGVPCSSLFKTVTVRCGHC) adopts a C4-type zinc-finger fold. Over residues 119–141 (ASPNVSSITSSNSSCANNAPATS) the composition is skewed to low complexity. A disordered region spans residues 119 to 174 (ASPNVSSITSSNSSCANNAPATSMASAANKATQREPQQPKNAPSANRTSEKRQRVP). Polar residues predominate over residues 142-165 (MASAANKATQREPQQPKNAPSANR).

The protein belongs to the YABBY family.

It localises to the nucleus. In terms of biological role, may be involved in leaf cell growth and differentiation, rather than abaxial cell fate determination. This chain is Protein YABBY 5 (YAB5), found in Oryza sativa subsp. indica (Rice).